The sequence spans 288 residues: 4-diphosphocytidyl-2-C-methyl-D-erythritol kinase (288 aa).

The active site involves K13. 96–106 is a binding site for ATP; it reads PMGGGIGGGSS. Residue D138 is part of the active site.

It belongs to the GHMP kinase family. IspE subfamily.

It carries out the reaction 4-CDP-2-C-methyl-D-erythritol + ATP = 4-CDP-2-C-methyl-D-erythritol 2-phosphate + ADP + H(+). It functions in the pathway isoprenoid biosynthesis; isopentenyl diphosphate biosynthesis via DXP pathway; isopentenyl diphosphate from 1-deoxy-D-xylulose 5-phosphate: step 3/6. Functionally, catalyzes the phosphorylation of the position 2 hydroxy group of 4-diphosphocytidyl-2C-methyl-D-erythritol. The polypeptide is 4-diphosphocytidyl-2-C-methyl-D-erythritol kinase (Aliivibrio fischeri (strain MJ11) (Vibrio fischeri)).